The sequence spans 301 residues: Probable alpha-L-glutamate ligase (301 aa).

Residues 104–287 (LQLLSRKGIG…VAGLIYEFIE (184 aa)) enclose the ATP-grasp domain. ATP contacts are provided by residues lysine 141, 178–179 (EF), aspartate 187, and 211–213 (RSN). Aspartate 248, glutamate 260, and asparagine 262 together coordinate Mg(2+). Mn(2+)-binding residues include aspartate 248, glutamate 260, and asparagine 262.

Belongs to the RimK family. Mg(2+) is required as a cofactor. Requires Mn(2+) as cofactor.

The chain is Probable alpha-L-glutamate ligase from Shewanella loihica (strain ATCC BAA-1088 / PV-4).